A 720-amino-acid chain; its full sequence is Calpain-12 (720 aa).

Positions 45–341 (LFRDPCFPAG…FNTVQICSLS (297 aa)) constitute a Calpain catalytic domain. Active-site residues include C105, H259, and N283. The domain III stretch occupies residues 342–541 (PEVLGPSPAG…DDVISADLDA (200 aa)). The span at 393 to 403 (DEEEDDDDEEG) shows a compositional bias: acidic residues. The disordered stretch occupies residues 393–415 (DEEEDDDDEEGPWGGWGAAGARG). Residues 542–720 (LQAPYKPLEL…KQWSEVATFS (179 aa)) form a domain IV region. One can recognise an EF-hand domain in the interval 621-656 (GHLMSWQATFDKFDEDASGTMNSCELRLALTAAGFH). Ca(2+) contacts are provided by D634, D636, S638, T640, and E645.

This sequence belongs to the peptidase C2 family. As to expression, expression localized to the cortex of the hair follicle during the anagen phase of hair cycle.

Its function is as follows. Calcium-regulated non-lysosomal thiol-protease. The polypeptide is Calpain-12 (Capn12) (Mus musculus (Mouse)).